Here is a 612-residue protein sequence, read N- to C-terminus: Sulfite reductase [NADPH] flavoprotein alpha-component (612 aa).

One can recognise a Flavodoxin-like domain in the interval 64–202; it reads VTLISASQTG…QAQQWRQQVV (139 aa). FMN contacts are provided by residues 70–75, 117–120, and 153–162; these read SQTGNA, STQG, and LGDTSYEHFC. An FAD-binding FR-type domain is found at 247 to 461; sequence TAPLTAQLSV…IEHNDNFRLP (215 aa). FAD-binding positions include Thr335, Lys369, 399-402, 417-419, Tyr423, and 432-435; these read RLYS, TVG, and GGAS. NADP(+)-binding positions include 532–533, 538–542, and Asp574; these read SR and KIYVQ. Residue Tyr612 coordinates FAD.

This sequence belongs to the NADPH-dependent sulphite reductase flavoprotein subunit CysJ family. In the N-terminal section; belongs to the flavodoxin family. The protein in the C-terminal section; belongs to the flavoprotein pyridine nucleotide cytochrome reductase family. Alpha(8)-beta(8). The alpha component is a flavoprotein, the beta component is a hemoprotein. Requires FAD as cofactor. FMN is required as a cofactor.

It catalyses the reaction hydrogen sulfide + 3 NADP(+) + 3 H2O = sulfite + 3 NADPH + 4 H(+). It participates in sulfur metabolism; hydrogen sulfide biosynthesis; hydrogen sulfide from sulfite (NADPH route): step 1/1. Component of the sulfite reductase complex that catalyzes the 6-electron reduction of sulfite to sulfide. This is one of several activities required for the biosynthesis of L-cysteine from sulfate. The flavoprotein component catalyzes the electron flow from NADPH -&gt; FAD -&gt; FMN to the hemoprotein component. In Yersinia pseudotuberculosis serotype O:1b (strain IP 31758), this protein is Sulfite reductase [NADPH] flavoprotein alpha-component.